Here is a 620-residue protein sequence, read N- to C-terminus: Bicaudal D-related protein homolog (620 aa).

A compositionally biased stretch (low complexity) spans 23–41 (NNNNNSIVGGSSSSSSGGN). The interval 23-53 (NNNNNSIVGGSSSSSSGGNKSKRPRQFGQYS) is disordered. 2 coiled-coil regions span residues 120-331 (AAEL…LSER) and 461-575 (VLEQ…LIDE). 2 stretches are compositionally biased toward basic and acidic residues: residues 493–503 (KEERDQARGDL) and 509–528 (RDELLSKAQTERDAANDRRT). Residues 493 to 528 (KEERDQARGDLEDNTDRDELLSKAQTERDAANDRRT) form a disordered region.

This sequence belongs to the BICDR family. As to quaternary structure, may homodimerize but does not interact with BicD. May interact with eEF1gamma; The interaction is probably indirect.

Functions redundantly with BicD. Involved in formation and/or development of mechanosensory organs during metamorphosis. During macrochaetae development, together with BicD, involved in Rab 6 and Spn-F stability and distribution and actin cytoskeleton organization. This is Bicaudal D-related protein homolog from Drosophila melanogaster (Fruit fly).